An 861-amino-acid polypeptide reads, in one-letter code: Glucans biosynthesis glucosyltransferase H (861 aa).

Disordered regions lie at residues 65-89 (RLSA…SVGR) and 101-129 (AGEP…SMVP). Composition is skewed to basic and acidic residues over residues 67–76 (SAREPAKGET) and 105–114 (LLKRRPDGTV). 6 helical membrane passes run 181–201 (FLLG…TKVL), 208–228 (LLEI…SAGF), 532–552 (VFLT…FLLL), 589–609 (LFSA…LLLV), 616–636 (GGLP…ALLA), and 698–718 (FVLW…LSVM).

This sequence belongs to the glycosyltransferase 2 family. OpgH subfamily.

Its subcellular location is the cell inner membrane. It participates in glycan metabolism; osmoregulated periplasmic glucan (OPG) biosynthesis. Its function is as follows. Involved in the biosynthesis of osmoregulated periplasmic glucans (OPGs). This is Glucans biosynthesis glucosyltransferase H from Cupriavidus pinatubonensis (strain JMP 134 / LMG 1197) (Cupriavidus necator (strain JMP 134)).